The following is a 149-amino-acid chain: Transcriptional repressor NrdR (149 aa).

A zinc finger spans residues cysteine 3–cysteine 34. Residues proline 49–glutamate 139 form the ATP-cone domain.

This sequence belongs to the NrdR family. Requires Zn(2+) as cofactor.

Negatively regulates transcription of bacterial ribonucleotide reductase nrd genes and operons by binding to NrdR-boxes. The polypeptide is Transcriptional repressor NrdR (Edwardsiella ictaluri (strain 93-146)).